Here is a 943-residue protein sequence, read N- to C-terminus: Protein translocase subunit SecA (943 aa).

ATP is bound by residues glutamine 90, 108-112 (GEGKT), and aspartate 509. A disordered region spans residues 534–561 (KPDNEHKPPIPQQRNSKSGGGFSANVDS).

The protein belongs to the SecA family. As to quaternary structure, monomer and homodimer. Part of the essential Sec protein translocation apparatus which comprises SecA, SecYEG and auxiliary proteins SecDF. Other proteins may also be involved.

Its subcellular location is the cell inner membrane. The protein localises to the cellular thylakoid membrane. It is found in the cytoplasm. The catalysed reaction is ATP + H2O + cellular proteinSide 1 = ADP + phosphate + cellular proteinSide 2.. Its function is as follows. Part of the Sec protein translocase complex. Interacts with the SecYEG preprotein conducting channel. Has a central role in coupling the hydrolysis of ATP to the transfer of proteins into and across the cell membrane, serving as an ATP-driven molecular motor driving the stepwise translocation of polypeptide chains across the membrane. Functionally, probably participates in protein translocation into and across both the cytoplasmic and thylakoid membranes in cyanobacterial cells. This is Protein translocase subunit SecA from Prochlorococcus marinus subsp. pastoris (strain CCMP1986 / NIES-2087 / MED4).